Consider the following 107-residue polypeptide: Protamine-2 (107 aa).

Residues methionine 1–arginine 94 form a disordered region. Phosphoserine is present on residues serine 8, serine 10, and serine 33. Over residues threonine 43–arginine 94 the composition is skewed to basic residues.

Belongs to the protamine P2 family. In terms of assembly, interacts with TDRP. In terms of processing, proteolytic processing into mature chains is required for histone eviction during spermatogenesis. Transition proteins (TNP1 and TNP2) are required for processing. As to expression, expressed in spermatids (at protein level).

The protein localises to the nucleus. The protein resides in the chromosome. Protamines substitute for histones in the chromatin of sperm during the haploid phase of spermatogenesis. They compact sperm DNA into a highly condensed, stable and inactive complex. This Mus musculus (Mouse) protein is Protamine-2 (Prm2).